The chain runs to 408 residues: Homogentisate geranylgeranyltransferase (408 aa).

The transit peptide at 1–68 (MQATTAAAAA…SAISQATSPR (68 aa)) directs the protein to the chloroplast. The next 9 helical transmembrane spans lie at 122-142 (HTIFGTIIGITSVSLLPMKSI), 149-169 (VLKGYLEALAAALCMNIYVVG), 194-214 (SVATGVFLVVTFLIMSFSIGI), 217-237 (GSVPLMYALVVSFLLGSAYSI), 248-268 (ALLAASCILFVRAILVQLAFF), 286-306 (LVFATLFMCCFSAVIALFKDI), 329-349 (VYQLCISILLTAYLAATVVGA), 352-372 (THLLQKIITVSGHGLLALTLW), and 386-406 (VTSFYMFIWKLFYAEYFLIPF).

This sequence belongs to the UbiA prenyltransferase family.

The protein localises to the plastid. It is found in the chloroplast membrane. It carries out the reaction homogentisate + (2E,6E,10E)-geranylgeranyl diphosphate + H(+) = 6-geranylgeranyl-2-methylbenzene-1,4-diol + CO2 + diphosphate. It functions in the pathway cofactor biosynthesis; tocopherol biosynthesis. Functionally, involved in the synthesis of tocotrienol (vitamin E). Catalyzes the condensation of homogentisate and geranylgeranyl diphosphate to form 2-methyl-6-geranylgeranylbenzoquinol. Possesses low activity with phytyl diphosphate as substrate. The chain is Homogentisate geranylgeranyltransferase from Triticum aestivum (Wheat).